The primary structure comprises 428 residues: Glutamate-1-semialdehyde 2,1-aminomutase 1 (428 aa).

An N6-(pyridoxal phosphate)lysine modification is found at lysine 267.

Belongs to the class-III pyridoxal-phosphate-dependent aminotransferase family. HemL subfamily. As to quaternary structure, homodimer. Pyridoxal 5'-phosphate is required as a cofactor.

The protein resides in the cytoplasm. The catalysed reaction is (S)-4-amino-5-oxopentanoate = 5-aminolevulinate. Its pathway is porphyrin-containing compound metabolism; protoporphyrin-IX biosynthesis; 5-aminolevulinate from L-glutamyl-tRNA(Glu): step 2/2. The chain is Glutamate-1-semialdehyde 2,1-aminomutase 1 (hemL1) from Staphylococcus aureus (strain NCTC 8325 / PS 47).